The chain runs to 274 residues: Cytochrome b-c1 complex subunit Rieske, mitochondrial (274 aa).

Residues 79–103 (SHTDIKVPDFSDYRRSEVLDTTKSS) lie on the Mitochondrial matrix side of the membrane. A helical transmembrane segment spans residues 104–140 (RESSDARKGFSYLVTATTAVGVTYAAKSIVTQFVSSM). The Mitochondrial intermembrane portion of the chain corresponds to 141–274 (SASADVLAMS…FTSDDLVIVG (134 aa)). The Rieske domain maps to 187–272 (EAAVELSQLR…YEFTSDDLVI (86 aa)). Residues Cys217, His219, Cys236, His239, and Ser241 each contribute to the [2Fe-2S] cluster site. Cysteines 222 and 238 form a disulfide.

It belongs to the Rieske iron-sulfur protein family. As to quaternary structure, component of the ubiquinol-cytochrome c oxidoreductase (cytochrome b-c1 complex, complex III, CIII), a multisubunit enzyme composed of 11 subunits. The complex is composed of 3 respiratory subunits cytochrome b, cytochrome c1 and Rieske protein UQCRFS1, 2 core protein subunits UQCRC1/QCR1 and UQCRC2/QCR2, and 6 low-molecular weight protein subunits UQCRH/QCR6, UQCRB/QCR7, UQCRQ/QCR8, UQCR10/QCR9, UQCR11/QCR10 and subunit 9, the cleavage product of Rieske protein UQCRFS1. The complex exists as an obligatory dimer and forms supercomplexes (SCs) in the inner mitochondrial membrane with NADH-ubiquinone oxidoreductase (complex I, CI) and cytochrome c oxidase (complex IV, CIV), resulting in different assemblies (supercomplex SCI(1)III(2)IV(1) and megacomplex MCI(2)III(2)IV(2)). Incorporation of the Rieske protein UQCRFS1 is the penultimate step in complex III assembly. Interacts with TTC19, which is involved in the clearance of UQCRFS1 fragments. Component of the ubiquinol-cytochrome c oxidoreductase (cytochrome b-c1 complex, complex III, CIII). Subunit 9 corresponds to the mitochondrial targeting sequence (MTS) of Rieske protein UQCRFS1. It is retained after processing and incorporated inside complex III, where it remains bound to the complex and localizes between the 2 core subunits UQCRC1/QCR1 and UQCRC2/QCR2. The cofactor is [2Fe-2S] cluster. In terms of processing, proteolytic processing is necessary for the correct insertion of UQCRFS1 in the complex III dimer. Several fragments are generated during UQCRFS1 insertion, most probably due to the endogenous matrix-processing peptidase (MPP) activity of the 2 core protein subunits UQCRC1/QCR1 and UQCRC2/QCR2, which are homologous to the 2 mitochondrial-processing peptidase (MPP) subunits beta-MPP and alpha-MPP respectively. The action of the protease is also necessary for the clearance of the UQCRFS1 fragments.

Its subcellular location is the mitochondrion inner membrane. It carries out the reaction a quinol + 2 Fe(III)-[cytochrome c](out) = a quinone + 2 Fe(II)-[cytochrome c](out) + 2 H(+)(out). Functionally, component of the ubiquinol-cytochrome c oxidoreductase, a multisubunit transmembrane complex that is part of the mitochondrial electron transport chain which drives oxidative phosphorylation. The respiratory chain contains 3 multisubunit complexes succinate dehydrogenase (complex II, CII), ubiquinol-cytochrome c oxidoreductase (cytochrome b-c1 complex, complex III, CIII) and cytochrome c oxidase (complex IV, CIV), that cooperate to transfer electrons derived from NADH and succinate to molecular oxygen, creating an electrochemical gradient over the inner membrane that drives transmembrane transport and the ATP synthase. The cytochrome b-c1 complex catalyzes electron transfer from ubiquinol to cytochrome c, linking this redox reaction to translocation of protons across the mitochondrial inner membrane, with protons being carried across the membrane as hydrogens on the quinol. In the process called Q cycle, 2 protons are consumed from the matrix, 4 protons are released into the intermembrane space and 2 electrons are passed to cytochrome c. The Rieske protein is a catalytic core subunit containing a [2Fe-2S] iron-sulfur cluster. It cycles between 2 conformational states during catalysis to transfer electrons from the quinol bound in the Q(0) site in cytochrome b to cytochrome c1. Incorporation of UQCRFS1 is the penultimate step in complex III assembly. Component of the ubiquinol-cytochrome c oxidoreductase (cytochrome b-c1 complex, complex III, CIII). UQCRFS1 undergoes proteolytic processing once it is incorporated in the complex III dimer. One of the fragments, called subunit 9, corresponds to its mitochondrial targeting sequence (MTS). The proteolytic processing is necessary for the correct insertion of UQCRFS1 in the complex III dimer, but the persistence of UQCRFS1-derived fragments may prevent newly imported UQCRFS1 to be processed and assembled into complex III and is detrimental for the complex III structure and function. The protein is Cytochrome b-c1 complex subunit Rieske, mitochondrial (UQCRFS1) of Aotus azarae (Azara's night monkey).